We begin with the raw amino-acid sequence, 43 residues long: Protein PsbN (43 aa).

The chain crosses the membrane as a helical span at residues 5-27 (TLVAISISGSLVSFTGYALYTAF).

Belongs to the PsbN family.

The protein resides in the plastid. It is found in the chloroplast thylakoid membrane. May play a role in photosystem I and II biogenesis. The polypeptide is Protein PsbN (Lactoris fernandeziana).